A 419-amino-acid polypeptide reads, in one-letter code: Protein phosphatase methylesterase 1 (419 aa).

Over residues 1–12 (MSQLHRGMHKKP) the composition is skewed to basic residues. The interval 1-75 (MSQLHRGMHK…KSAASPTVPA (75 aa)) is disordered. The span at 32-52 (TETEETVECTEEEEEQDETDG) shows a compositional bias: acidic residues. Active-site residues include Ser-230, Asp-256, and His-383.

The protein belongs to the AB hydrolase superfamily.

It catalyses the reaction [phosphatase 2A protein]-C-terminal L-leucine methyl ester + H2O = [phosphatase 2A protein]-C-terminal L-leucine + methanol + H(+). Its function is as follows. Demethylates proteins that have been reversibly carboxymethylated. Demethylates the phosphatase PP2A catalytic subunit. This is Protein phosphatase methylesterase 1 (PPE1) from Yarrowia lipolytica (strain CLIB 122 / E 150) (Yeast).